The sequence spans 421 residues: tRNA (guanine(37)-N(1))-methyltransferase (421 aa).

S-adenosyl-L-methionine is bound by residues Arg-198, 242 to 243, 270 to 271, and Asn-293; these read DL and DA.

This sequence belongs to the class I-like SAM-binding methyltransferase superfamily. TRM5/TYW2 family. In terms of assembly, monomer.

The protein localises to the mitochondrion matrix. It localises to the nucleus. Its subcellular location is the cytoplasm. The enzyme catalyses guanosine(37) in tRNA + S-adenosyl-L-methionine = N(1)-methylguanosine(37) in tRNA + S-adenosyl-L-homocysteine + H(+). In terms of biological role, specifically methylates the N1 position of guanosine-37 in various cytoplasmic and mitochondrial tRNAs. Methylation is not dependent on the nature of the nucleoside 5' of the target nucleoside. This is the first step in the biosynthesis of wybutosine (yW), a modified base adjacent to the anticodon of tRNAs and required for accurate decoding. The protein is tRNA (guanine(37)-N(1))-methyltransferase of Paramecium tetraurelia.